Here is a 108-residue protein sequence, read N- to C-terminus: UPF0145 protein Acel_2109 (108 aa).

Belongs to the UPF0145 family.

The sequence is that of UPF0145 protein Acel_2109 from Acidothermus cellulolyticus (strain ATCC 43068 / DSM 8971 / 11B).